The chain runs to 282 residues: Putative hydrolase BamMC406_5393 (282 aa).

Mg(2+) contacts are provided by Glu124, Glu126, and Asp155.

The protein belongs to the FAH family. Mg(2+) is required as a cofactor.

The sequence is that of Putative hydrolase BamMC406_5393 from Burkholderia ambifaria (strain MC40-6).